A 192-amino-acid chain; its full sequence is 3-hydroxyanthranilate 3,4-dioxygenase 1 (192 aa).

Residue Arg50 participates in O2 binding. Fe cation is bound by residues His54, Glu60, and His102. Residue Glu60 coordinates substrate. Substrate-binding residues include Arg106 and Glu116. A divalent metal cation is bound by residues Cys131, Cys134, Cys168, and Cys171.

Belongs to the 3-HAO family. Fe(2+) is required as a cofactor.

The protein resides in the cytoplasm. The catalysed reaction is 3-hydroxyanthranilate + O2 = (2Z,4Z)-2-amino-3-carboxymuconate 6-semialdehyde. It functions in the pathway cofactor biosynthesis; NAD(+) biosynthesis; quinolinate from L-kynurenine: step 3/3. In terms of biological role, catalyzes the oxidative ring opening of 3-hydroxyanthranilate to 2-amino-3-carboxymuconate semialdehyde, which spontaneously cyclizes to quinolinate. The protein is 3-hydroxyanthranilate 3,4-dioxygenase 1 (bna1-1) of Aspergillus fumigatus (strain CBS 144.89 / FGSC A1163 / CEA10) (Neosartorya fumigata).